A 323-amino-acid polypeptide reads, in one-letter code: Fructose-1,6-bisphosphatase class 1 (323 aa).

Mg(2+)-binding residues include glutamate 90, aspartate 111, leucine 113, and aspartate 114. Residues 114–117 (DGSS), tyrosine 222, and lysine 253 contribute to the substrate site. Glutamate 259 is a Mg(2+) binding site.

This sequence belongs to the FBPase class 1 family. Homotetramer. The cofactor is Mg(2+).

It is found in the cytoplasm. It carries out the reaction beta-D-fructose 1,6-bisphosphate + H2O = beta-D-fructose 6-phosphate + phosphate. It functions in the pathway carbohydrate biosynthesis; gluconeogenesis. This is Fructose-1,6-bisphosphatase class 1 from Pelobacter propionicus (strain DSM 2379 / NBRC 103807 / OttBd1).